An 89-amino-acid chain; its full sequence is Small ribosomal subunit protein uS14 (89 aa).

The protein belongs to the universal ribosomal protein uS14 family. As to quaternary structure, part of the 30S ribosomal subunit. Contacts proteins S3 and S10.

Binds 16S rRNA, required for the assembly of 30S particles and may also be responsible for determining the conformation of the 16S rRNA at the A site. In Amoebophilus asiaticus (strain 5a2), this protein is Small ribosomal subunit protein uS14.